A 620-amino-acid polypeptide reads, in one-letter code: Rpb7-binding protein seb1 (620 aa).

In terms of domain architecture, CID spans 1-151 (MSGIAEFDGI…SLRSKLKDAM (151 aa)). Disordered stretches follow at residues 151 to 191 (MAST…RPVE) and 327 to 398 (SVPL…TIPP). Residue Ser-343 is modified to Phosphoserine. Residues 361–374 (PSPSHLSIPSTLPP) show a composition bias toward low complexity. The RRM domain occupies 406–478 (RTLFLGGITR…TTIRTKWGVG (73 aa)). Residues 558–620 (RGRKPYRGGP…YVSQPPWQPQ (63 aa)) are disordered. Basic and acidic residues predominate over residues 570–580 (HHGERHFDSGN).

In terms of assembly, interacts with rpb7.

Its subcellular location is the nucleus. Its function is as follows. Involved in the processing of pol II transcripts. This is Rpb7-binding protein seb1 (seb1) from Schizosaccharomyces pombe (strain 972 / ATCC 24843) (Fission yeast).